We begin with the raw amino-acid sequence, 344 residues long: Glyceraldehyde-3-phosphate dehydrogenase (344 aa).

Residues 11–12 (TI) and G110 each bind NAD(+). 139-141 (SCN) provides a ligand contact to D-glyceraldehyde 3-phosphate. C140 acts as the Nucleophile in catalysis. NAD(+) is bound at residue R169. 195-196 (HG) provides a ligand contact to D-glyceraldehyde 3-phosphate. Q302 is a binding site for NAD(+).

The protein belongs to the glyceraldehyde-3-phosphate dehydrogenase family. Homotetramer.

It localises to the cytoplasm. The enzyme catalyses D-glyceraldehyde 3-phosphate + phosphate + NADP(+) = (2R)-3-phospho-glyceroyl phosphate + NADPH + H(+). It carries out the reaction D-glyceraldehyde 3-phosphate + phosphate + NAD(+) = (2R)-3-phospho-glyceroyl phosphate + NADH + H(+). Its pathway is carbohydrate degradation; glycolysis; pyruvate from D-glyceraldehyde 3-phosphate: step 1/5. The sequence is that of Glyceraldehyde-3-phosphate dehydrogenase from Pyrobaculum arsenaticum (strain DSM 13514 / JCM 11321 / PZ6).